The primary structure comprises 420 residues: UDP-N-acetylglucosamine 1-carboxyvinyltransferase (420 aa).

22-23 (KN) contributes to the phosphoenolpyruvate binding site. A UDP-N-acetyl-alpha-D-glucosamine-binding site is contributed by R92. C116 serves as the catalytic Proton donor. Position 116 is a 2-(S-cysteinyl)pyruvic acid O-phosphothioketal (C116). D306 and I328 together coordinate UDP-N-acetyl-alpha-D-glucosamine.

The protein belongs to the EPSP synthase family. MurA subfamily.

Its subcellular location is the cytoplasm. It catalyses the reaction phosphoenolpyruvate + UDP-N-acetyl-alpha-D-glucosamine = UDP-N-acetyl-3-O-(1-carboxyvinyl)-alpha-D-glucosamine + phosphate. The protein operates within cell wall biogenesis; peptidoglycan biosynthesis. In terms of biological role, cell wall formation. Adds enolpyruvyl to UDP-N-acetylglucosamine. The polypeptide is UDP-N-acetylglucosamine 1-carboxyvinyltransferase (Blochmanniella floridana).